We begin with the raw amino-acid sequence, 99 residues long: Indole-3-acetic acid-induced protein ARG2 (99 aa).

The interval 40-62 is disordered; that stretch reads RGGASIGGNMVPKSGEEKVRGGE. A compositionally biased stretch (basic and acidic residues) spans 53–62; sequence SGEEKVRGGE.

The chain is Indole-3-acetic acid-induced protein ARG2 (ARG2) from Vigna radiata var. radiata (Mung bean).